We begin with the raw amino-acid sequence, 462 residues long: Argininosuccinate lyase (462 aa).

It belongs to the lyase 1 family. Argininosuccinate lyase subfamily.

Its subcellular location is the cytoplasm. The catalysed reaction is 2-(N(omega)-L-arginino)succinate = fumarate + L-arginine. It functions in the pathway amino-acid biosynthesis; L-arginine biosynthesis; L-arginine from L-ornithine and carbamoyl phosphate: step 3/3. The sequence is that of Argininosuccinate lyase from Gloeothece citriformis (strain PCC 7424) (Cyanothece sp. (strain PCC 7424)).